Reading from the N-terminus, the 257-residue chain is Imidazole glycerol phosphate synthase subunit HisF (257 aa).

Residues Asp-11 and Asp-130 contribute to the active site.

The protein belongs to the HisA/HisF family. In terms of assembly, heterodimer of HisH and HisF.

The protein resides in the cytoplasm. The catalysed reaction is 5-[(5-phospho-1-deoxy-D-ribulos-1-ylimino)methylamino]-1-(5-phospho-beta-D-ribosyl)imidazole-4-carboxamide + L-glutamine = D-erythro-1-(imidazol-4-yl)glycerol 3-phosphate + 5-amino-1-(5-phospho-beta-D-ribosyl)imidazole-4-carboxamide + L-glutamate + H(+). It functions in the pathway amino-acid biosynthesis; L-histidine biosynthesis; L-histidine from 5-phospho-alpha-D-ribose 1-diphosphate: step 5/9. Functionally, IGPS catalyzes the conversion of PRFAR and glutamine to IGP, AICAR and glutamate. The HisF subunit catalyzes the cyclization activity that produces IGP and AICAR from PRFAR using the ammonia provided by the HisH subunit. This chain is Imidazole glycerol phosphate synthase subunit HisF, found in Afipia carboxidovorans (strain ATCC 49405 / DSM 1227 / KCTC 32145 / OM5) (Oligotropha carboxidovorans).